A 388-amino-acid chain; its full sequence is L-lactate dehydrogenase (388 aa).

The 380-residue stretch at 1–380 (MIISAASDYR…SADALSRVTR (380 aa)) folds into the FMN hydroxy acid dehydrogenase domain. Residue Tyr24 coordinates substrate. FMN contacts are provided by Ser106 and Gln127. Tyr129 contributes to the substrate binding site. Residue Thr155 participates in FMN binding. Arg164 is a binding site for substrate. Lys251 contributes to the FMN binding site. Catalysis depends on His275, which acts as the Proton acceptor. Arg278 provides a ligand contact to substrate. 306 to 330 (DSGIRSGLDVVRMLALGADAVLLGR) serves as a coordination point for FMN.

This sequence belongs to the FMN-dependent alpha-hydroxy acid dehydrogenase family. It depends on FMN as a cofactor.

The protein localises to the cell inner membrane. It catalyses the reaction (S)-lactate + A = pyruvate + AH2. Its function is as follows. Catalyzes the conversion of L-lactate to pyruvate. Is coupled to the respiratory chain. The protein is L-lactate dehydrogenase of Xanthomonas euvesicatoria pv. vesicatoria (strain 85-10) (Xanthomonas campestris pv. vesicatoria).